Here is a 175-residue protein sequence, read N- to C-terminus: ATP synthase subunit d, mitochondrial (175 aa).

N-acetylserine is present on Ser-2.

Belongs to the ATPase d subunit family.

Its subcellular location is the mitochondrion inner membrane. Functionally, mitochondrial membrane ATP synthase (F(1)F(0) ATP synthase or Complex V) produces ATP from ADP in the presence of a proton gradient across the membrane which is generated by electron transport complexes of the respiratory chain. F-type ATPases consist of two structural domains, F(1) - containing the extramembraneous catalytic core, and F(0) - containing the membrane proton channel, linked together by a central stalk and a peripheral stalk. During catalysis, ATP synthesis in the catalytic domain of F(1) is coupled via a rotary mechanism of the central stalk subunits to proton translocation. Part of the complex F(0) domain and the peripheric stalk, which acts as a stator to hold the catalytic alpha(3)beta(3) subcomplex and subunit a/ATP6 static relative to the rotary elements. This Schizosaccharomyces pombe (strain 972 / ATCC 24843) (Fission yeast) protein is ATP synthase subunit d, mitochondrial (atp7).